The sequence spans 84 residues: Large ribosomal subunit protein bL27 (84 aa).

The disordered stretch occupies residues 1-21; sequence MAHKKGGGSTKNGRDSNPKYL.

This sequence belongs to the bacterial ribosomal protein bL27 family.

This chain is Large ribosomal subunit protein bL27, found in Chlorobium phaeovibrioides (strain DSM 265 / 1930) (Prosthecochloris vibrioformis (strain DSM 265)).